Consider the following 490-residue polypeptide: MMMMIILLWSIIFMTILFLKKQLSGKKGKTPPSPPGLPLIGNLHQLGRHTHRSLCDLSRRYGPLMLLHLGRVPVLIVSSADMAQEILKTHDQAFANRPRSKLSQKLLYNNRDVASAPYGEYWRQMKSVCVIHLLSNKMVRSFRDVREEEITLMMAKIRKSSSLPFNVSKVLECLTNDVICRVALGRKYGGETDFKKLTDRLSELLGTFSIGSFVPWLAWVDWIRGWDAQLDKMGKDLDDFFEKVVQDHEDGDRRDGTDLIDALLRVKREKSPGFEIERVSIKAITLDVFVGGSDTSFTLLEWAMTELLRHPKSLNRLQEEVRTICKGKSRVSEDDIQGMKYLKAVIKEALRLHPPFPMMAPHESTEDVKLRDYHIPAGTQVMMNAWAIGREVATWGPDAEEFKPERHLDTSVDFRGQNFELLPFGAGRRICPAVSFAVVLNEVVLANLVHGFDWKLPEESKEDKTDVAESSGFSVHREFPLYAVASPYLT.

A helical transmembrane segment spans residues 1–21 (MMMMIILLWSIIFMTILFLKK). Heme is bound at residue Cys-431.

This sequence belongs to the cytochrome P450 family. It depends on heme as a cofactor.

The protein resides in the membrane. The sequence is that of Cytochrome P450 71A25 (CYP71A25) from Arabidopsis thaliana (Mouse-ear cress).